Reading from the N-terminus, the 123-residue chain is NADH-quinone oxidoreductase subunit A (123 aa).

3 helical membrane-spanning segments follow: residues 11–31 (YLPI…IMIL), 64–84 (ICFY…AFLV), and 93–113 (IGKI…IGFI).

It belongs to the complex I subunit 3 family. In terms of assembly, NDH-1 is composed of 14 different subunits. Subunits NuoA, H, J, K, L, M, N constitute the membrane sector of the complex.

The protein localises to the cell inner membrane. It carries out the reaction a quinone + NADH + 5 H(+)(in) = a quinol + NAD(+) + 4 H(+)(out). NDH-1 shuttles electrons from NADH, via FMN and iron-sulfur (Fe-S) centers, to quinones in the respiratory chain. The immediate electron acceptor for the enzyme in this species is believed to be ubiquinone. Couples the redox reaction to proton translocation (for every two electrons transferred, four hydrogen ions are translocated across the cytoplasmic membrane), and thus conserves the redox energy in a proton gradient. In Rickettsia conorii (strain ATCC VR-613 / Malish 7), this protein is NADH-quinone oxidoreductase subunit A.